A 596-amino-acid polypeptide reads, in one-letter code: Aspartate--tRNA(Asp/Asn) ligase (596 aa).

Position 175 (E175) interacts with L-aspartate. The segment at 199–202 (QQYK) is aspartate. The L-aspartate site is built by R221 and H454. 221-223 (RDE) contacts ATP. E488 is a binding site for ATP. R495 is an L-aspartate binding site. 540–543 (GVDR) provides a ligand contact to ATP.

The protein belongs to the class-II aminoacyl-tRNA synthetase family. Type 1 subfamily. As to quaternary structure, homodimer.

Its subcellular location is the cytoplasm. It carries out the reaction tRNA(Asx) + L-aspartate + ATP = L-aspartyl-tRNA(Asx) + AMP + diphosphate. Its function is as follows. Aspartyl-tRNA synthetase with relaxed tRNA specificity since it is able to aspartylate not only its cognate tRNA(Asp) but also tRNA(Asn). Reaction proceeds in two steps: L-aspartate is first activated by ATP to form Asp-AMP and then transferred to the acceptor end of tRNA(Asp/Asn). The polypeptide is Aspartate--tRNA(Asp/Asn) ligase (Bartonella henselae (strain ATCC 49882 / DSM 28221 / CCUG 30454 / Houston 1) (Rochalimaea henselae)).